The following is a 456-amino-acid chain: Equilibrative nucleoside transporter 2 (456 aa).

The chain crosses the membrane as a helical span at residues 13-33 (LVGISFFILGLGTLLPWNFFI). Asn56 carries N-linked (GlcNAc...) asparagine glycosylation. 5 helical membrane-spanning segments follow: residues 69–89 (WVTL…SFLY), 98–118 (ILGS…LVKV), 123–143 (GLFF…CAVL), 161–181 (LFLS…LMSL), and 192–212 (LGYF…YLSL). Residues 248–277 (GVPISPQQASPTLDLDPEKEPEPEEPQKPG) form a disordered region. Ser252 bears the Phosphoserine mark. Basic and acidic residues predominate over residues 263 to 275 (DPEKEPEPEEPQK). A run of 5 helical transmembrane segments spans residues 288–308 (IWLT…VFPA), 323–343 (WGLF…DWLG), 360–380 (LLPL…LCHV), 396–416 (FITF…LTMC), and 432–452 (ALMT…SFLF).

This sequence belongs to the SLC29A/ENT transporter (TC 2.A.57) family.

It localises to the apical cell membrane. The protein localises to the basolateral cell membrane. It is found in the nucleus membrane. It catalyses the reaction inosine(in) = inosine(out). It carries out the reaction adenosine(in) = adenosine(out). The catalysed reaction is uridine(out) = uridine(in). The enzyme catalyses thymidine(in) = thymidine(out). It catalyses the reaction hypoxanthine(out) = hypoxanthine(in). It carries out the reaction adenine(out) = adenine(in). The catalysed reaction is cytidine(in) = cytidine(out). The enzyme catalyses thymine(out) = thymine(in). It catalyses the reaction uracil(in) = uracil(out). It carries out the reaction guanine(out) = guanine(in). The catalysed reaction is guanosine(in) = guanosine(out). Functionally, bidirectional uniporter involved in the facilitative transport of nucleosides and nucleobases, and contributes to maintaining their cellular homeostasis. Functions as a Na(+)-independent, passive transporter. Involved in the transport of nucleosides such as inosine, adenosine, uridine, thymidine, cytidine and guanosine. Also able to transport purine nucleobases (hypoxanthine, adenine, guanine) and pyrimidine nucleobases (thymine, uracil). Involved in nucleoside transport at basolateral membrane of kidney cells, allowing liver absorption of nucleoside metabolites. Mediates apical nucleoside uptake into Sertoli cells, thereby regulating the transport of nucleosides in testis across the blood-testis-barrier. Mediates both the influx and efflux of hypoxanthine in skeletal muscle microvascular endothelial cells to control the amount of intracellular hypoxanthine available for xanthine oxidase-mediated ROS production. The chain is Equilibrative nucleoside transporter 2 from Mus musculus (Mouse).